The chain runs to 216 residues: Adenylate kinase (216 aa).

10-15 (GAGKGT) contacts ATP. Residues 30-59 (STGDIFRANIKEKTPLGIEAKRYMDNGQLV) are NMP. AMP-binding positions include Thr-31, Arg-36, 57-59 (QLV), 85-88 (GFPR), and Gln-92. The interval 126 to 163 (GRRVCTSCGASYHIRFNPPKIEGKCDICDNELIQRKDD) is LID. Residue Arg-127 coordinates ATP. Zn(2+) is bound by residues Cys-130 and Cys-133. 136-137 (SY) is an ATP binding site. Residues Cys-150 and Cys-153 each contribute to the Zn(2+) site. Arg-160 and Arg-171 together coordinate AMP. Glu-199 contributes to the ATP binding site.

The protein belongs to the adenylate kinase family. Monomer.

The protein localises to the cytoplasm. It carries out the reaction AMP + ATP = 2 ADP. It functions in the pathway purine metabolism; AMP biosynthesis via salvage pathway; AMP from ADP: step 1/1. In terms of biological role, catalyzes the reversible transfer of the terminal phosphate group between ATP and AMP. Plays an important role in cellular energy homeostasis and in adenine nucleotide metabolism. In Clostridium botulinum (strain Loch Maree / Type A3), this protein is Adenylate kinase.